A 250-amino-acid chain; its full sequence is Ribonuclease 3 (250 aa).

Residues 1–15 show a composition bias toward basic residues; that stretch reads MTKTPAKKKRARSSK. Positions 1 to 21 are disordered; the sequence is MTKTPAKKKRARSSKAKGTDA. In terms of domain architecture, RNase III spans 22-150; it reads NAALEARIGH…VIGAIFLDGG (129 aa). Residue Glu63 participates in Mg(2+) binding. The active site involves Asp67. Positions 136 and 139 each coordinate Mg(2+). Glu139 is an active-site residue. A DRBM domain is found at 175–244; that stretch reads DPKTVLQEWA…ASVMIEREGV (70 aa).

Belongs to the ribonuclease III family. In terms of assembly, homodimer. Mg(2+) is required as a cofactor.

It is found in the cytoplasm. The enzyme catalyses Endonucleolytic cleavage to 5'-phosphomonoester.. Functionally, digests double-stranded RNA. Involved in the processing of primary rRNA transcript to yield the immediate precursors to the large and small rRNAs (23S and 16S). Processes some mRNAs, and tRNAs when they are encoded in the rRNA operon. Processes pre-crRNA and tracrRNA of type II CRISPR loci if present in the organism. In Bradyrhizobium diazoefficiens (strain JCM 10833 / BCRC 13528 / IAM 13628 / NBRC 14792 / USDA 110), this protein is Ribonuclease 3.